The primary structure comprises 267 residues: Diphthine--ammonia ligase (267 aa).

Tyr-97 carries the post-translational modification Phosphotyrosine.

Belongs to the Diphthine--ammonia ligase family.

The catalysed reaction is diphthine-[translation elongation factor 2] + NH4(+) + ATP = diphthamide-[translation elongation factor 2] + AMP + diphosphate + H(+). Its pathway is protein modification; peptidyl-diphthamide biosynthesis. Functionally, amidase that catalyzes the last step of diphthamide biosynthesis using ammonium and ATP. Diphthamide biosynthesis consists in the conversion of an L-histidine residue in the translation elongation factor eEF-2 (EEF2) to diphthamide. This chain is Diphthine--ammonia ligase (DPH6), found in Bos taurus (Bovine).